Reading from the N-terminus, the 303-residue chain is Methionyl-tRNA formyltransferase (303 aa).

Residue 108–111 (SDLP) coordinates (6S)-5,6,7,8-tetrahydrofolate.

The protein belongs to the Fmt family.

It carries out the reaction L-methionyl-tRNA(fMet) + (6R)-10-formyltetrahydrofolate = N-formyl-L-methionyl-tRNA(fMet) + (6S)-5,6,7,8-tetrahydrofolate + H(+). In terms of biological role, attaches a formyl group to the free amino group of methionyl-tRNA(fMet). The formyl group appears to play a dual role in the initiator identity of N-formylmethionyl-tRNA by promoting its recognition by IF2 and preventing the misappropriation of this tRNA by the elongation apparatus. The polypeptide is Methionyl-tRNA formyltransferase (Rickettsia prowazekii (strain Madrid E)).